The chain runs to 284 residues: Tropomyosin (284 aa).

The stretch at 1-284 (MDGIKKKMIA…DQTFAELTGY (284 aa)) forms a coiled coil. Positions 111-131 (TKLEEASKTAEESERGRKDLE) are disordered.

This sequence belongs to the tropomyosin family. As to quaternary structure, homodimer.

Its function is as follows. Tropomyosin, in association with the troponin complex, plays a central role in the calcium dependent regulation of muscle contraction. This chain is Tropomyosin, found in Schistosoma haematobium (Blood fluke).